The following is a 481-amino-acid chain: Sterol 14-alpha demethylase (481 aa).

The helical transmembrane segment at 1 to 21 (MFIEAIVLALTALILYSVYSV) threads the bilayer. Cys-422 contacts heme.

The protein belongs to the cytochrome P450 family. Heme is required as a cofactor.

Its subcellular location is the membrane. It catalyses the reaction a 14alpha-methyl steroid + 3 reduced [NADPH--hemoprotein reductase] + 3 O2 = a Delta(14) steroid + formate + 3 oxidized [NADPH--hemoprotein reductase] + 4 H2O + 4 H(+). Its pathway is steroid biosynthesis; zymosterol biosynthesis; zymosterol from lanosterol: step 1/6. In terms of biological role, catalyzes C14-demethylation of lanosterol which is critical for ergosterol biosynthesis. It transforms lanosterol into 4,4'-dimethyl cholesta-8,14,24-triene-3-beta-ol. Favors C4 dimethylated substrates, the substrate preference order is 24-methylenedihydrolanosterol &gt; 24,25-dihydrolanosterol &gt; lanosterol &gt; obtusifoliol &gt; norlanosterol. The protein is Sterol 14-alpha demethylase of Trypanosoma cruzi (strain CL Brener).